We begin with the raw amino-acid sequence, 688 residues long: Methionine--tRNA ligase (688 aa).

A 'HIGH' region motif is present at residues 15-25; that stretch reads PYANGPIHLGH. Positions 146, 149, 159, and 162 each coordinate Zn(2+). Residues 332–336 carry the 'KMSKS' region motif; that stretch reads KMSKS. Lys-335 provides a ligand contact to ATP. The segment at 552–576 is disordered; sequence AEAPKKADSKKATDTPVDTRPPLES. Residues 554-564 show a composition bias toward basic and acidic residues; the sequence is APKKADSKKAT. A tRNA-binding domain is found at 587–688; sequence DFAKIDLRIA…EGAQPGMRVK (102 aa).

Belongs to the class-I aminoacyl-tRNA synthetase family. MetG type 1 subfamily. As to quaternary structure, homodimer. Zn(2+) serves as cofactor.

Its subcellular location is the cytoplasm. The enzyme catalyses tRNA(Met) + L-methionine + ATP = L-methionyl-tRNA(Met) + AMP + diphosphate. In terms of biological role, is required not only for elongation of protein synthesis but also for the initiation of all mRNA translation through initiator tRNA(fMet) aminoacylation. The polypeptide is Methionine--tRNA ligase (Shewanella woodyi (strain ATCC 51908 / MS32)).